The sequence spans 311 residues: Syndecan-1 (311 aa).

An N-terminal signal peptide occupies residues 1-22 (MRRAALWLWLCALALRLQPALL). Over 23 to 255 (HSVAVNMPPE…GLLDRKEVLG (233 aa)) the chain is Extracellular. Disordered regions lie at residues 31-85 (PEDQ…PDAI) and 141-244 (TMAP…TGAS). Residues 32 to 42 (EDQDGSGDDSD) show a composition bias toward acidic residues. S37 is a glycosylation site (O-linked (Xyl...) (chondroitin sulfate) serine). An N-linked (GlcNAc...) asparagine glycan is attached at N43. O-linked (Xyl...) (heparan sulfate) serine glycans are attached at residues S45 and S47. Residues 71–84 (TTTATAPEPTSPDA) are compositionally biased toward low complexity. 2 stretches are compositionally biased toward basic and acidic residues: residues 151–162 (PHRDVQPDHHET) and 169–180 (GRMEPHRPHVEE). O-linked (Xyl...) (chondroitin sulfate) serine glycosylation is found at S204 and S214. Over residues 215 to 226 (GENAAGAAGEPG) the composition is skewed to low complexity. A helical transmembrane segment spans residues 256 to 276 (GVIAGGLVGLIFAVCLVGFML). Over 277–311 (YRMKKKDEGSYSLEEPKQANGGAYQKPTKQEEFYA) the chain is Cytoplasmic. Residues 285–311 (GSYSLEEPKQANGGAYQKPTKQEEFYA) are disordered. A Phosphoserine modification is found at S286.

The protein belongs to the syndecan proteoglycan family. As to quaternary structure, interacts with CDCP1. Interacts (via C-terminus) with TIAM1 (via PDZ domain). Interacts with MDK. Shedding is enhanced by a number of factors such as heparanase, thrombin or EGF. Also by stress and wound healing. PMA-mediated shedding is inhibited by TIMP3.

Its subcellular location is the membrane. The protein localises to the secreted. It localises to the extracellular exosome. Functionally, cell surface proteoglycan that contains both heparan sulfate and chondroitin sulfate and that links the cytoskeleton to the interstitial matrix. Regulates exosome biogenesis in concert with SDCBP and PDCD6IP. Able to induce its own expression in dental mesenchymal cells and also in the neighboring dental epithelial cells via an MSX1-mediated pathway. This is Syndecan-1 from Bos taurus (Bovine).